The chain runs to 402 residues: S-adenosylmethionine synthase (402 aa).

An ATP-binding site is contributed by histidine 17. Residue aspartate 19 coordinates Mg(2+). Residue glutamate 45 participates in K(+) binding. The L-methionine site is built by glutamate 58 and glutamine 101. The segment at glutamine 101 to glutamate 111 is flexible loop. Residues aspartate 177 to lysine 179, arginine 244 to phenylalanine 245, aspartate 253, arginine 259 to lysine 260, alanine 276, and lysine 280 contribute to the ATP site. Aspartate 253 is an L-methionine binding site. Lysine 284 contacts L-methionine.

This sequence belongs to the AdoMet synthase family. Homotetramer; dimer of dimers. Requires Mg(2+) as cofactor. K(+) serves as cofactor.

The protein resides in the cytoplasm. It catalyses the reaction L-methionine + ATP + H2O = S-adenosyl-L-methionine + phosphate + diphosphate. Its pathway is amino-acid biosynthesis; S-adenosyl-L-methionine biosynthesis; S-adenosyl-L-methionine from L-methionine: step 1/1. In terms of biological role, catalyzes the formation of S-adenosylmethionine (AdoMet) from methionine and ATP. The overall synthetic reaction is composed of two sequential steps, AdoMet formation and the subsequent tripolyphosphate hydrolysis which occurs prior to release of AdoMet from the enzyme. This Lactobacillus johnsonii (strain CNCM I-12250 / La1 / NCC 533) protein is S-adenosylmethionine synthase.